We begin with the raw amino-acid sequence, 339 residues long: Phosphate acyltransferase (339 aa).

This sequence belongs to the PlsX family. In terms of assembly, homodimer. Probably interacts with PlsY.

It localises to the cytoplasm. The enzyme catalyses a fatty acyl-[ACP] + phosphate = an acyl phosphate + holo-[ACP]. Its pathway is lipid metabolism; phospholipid metabolism. Its function is as follows. Catalyzes the reversible formation of acyl-phosphate (acyl-PO(4)) from acyl-[acyl-carrier-protein] (acyl-ACP). This enzyme utilizes acyl-ACP as fatty acyl donor, but not acyl-CoA. This is Phosphate acyltransferase from Helicobacter pylori (strain J99 / ATCC 700824) (Campylobacter pylori J99).